Reading from the N-terminus, the 226-residue chain is Glutathione peroxidase 3 (226 aa).

The first 24 residues, 1–24 (MARLFRASCLLSLLLAGFIPPSQG), serve as a signal peptide directing secretion. Residue Sec73 is part of the active site. Position 73 (Sec73) is a non-standard amino acid, selenocysteine.

Belongs to the glutathione peroxidase family. In terms of assembly, homotetramer. In terms of tissue distribution, secreted in plasma.

The protein localises to the secreted. The catalysed reaction is 2 glutathione + H2O2 = glutathione disulfide + 2 H2O. It catalyses the reaction tert-butyl hydroperoxide + 2 glutathione = tert-butanol + glutathione disulfide + H2O. Its function is as follows. Protects cells and enzymes from oxidative damage, by catalyzing the reduction of hydrogen peroxide, lipid peroxides and organic hydroperoxide, by glutathione. The polypeptide is Glutathione peroxidase 3 (Bos taurus (Bovine)).